The sequence spans 860 residues: Probable beta-glucosidase A (860 aa).

The N-terminal stretch at 1–19 (MRFTSIEAVALTAVSLASA) is a signal peptide. N-linked (GlcNAc...) asparagine glycans are attached at residues N61, N211, and N252. D280 is a catalytic residue. Residues N315, N322, N354, N387, N442, N523, N542, N564, N658, N690, and N712 are each glycosylated (N-linked (GlcNAc...) asparagine).

The protein belongs to the glycosyl hydrolase 3 family.

It localises to the secreted. It carries out the reaction Hydrolysis of terminal, non-reducing beta-D-glucosyl residues with release of beta-D-glucose.. Its pathway is glycan metabolism; cellulose degradation. Its function is as follows. Beta-glucosidases are one of a number of cellulolytic enzymes involved in the degradation of cellulosic biomass. Catalyzes the last step releasing glucose from the inhibitory cellobiose. The chain is Probable beta-glucosidase A (bglA) from Aspergillus niger (strain ATCC MYA-4892 / CBS 513.88 / FGSC A1513).